The sequence spans 130 residues: Peptide methionine sulfoxide reductase MsrB (130 aa).

Positions 8-130 constitute a MsrB domain; it reads LEEWRSMLDP…NSVCLDLVPR (123 aa). Cysteine 47, cysteine 50, cysteine 96, and cysteine 99 together coordinate Zn(2+). Residue cysteine 119 is the Nucleophile of the active site.

The protein belongs to the MsrB Met sulfoxide reductase family. The cofactor is Zn(2+).

The catalysed reaction is L-methionyl-[protein] + [thioredoxin]-disulfide + H2O = L-methionyl-(R)-S-oxide-[protein] + [thioredoxin]-dithiol. The sequence is that of Peptide methionine sulfoxide reductase MsrB from Pseudomonas fluorescens (strain ATCC BAA-477 / NRRL B-23932 / Pf-5).